A 728-amino-acid chain; its full sequence is Dehydrocurvularin biosynthesis regulator (728 aa).

A DNA-binding region (zn(2)-C6 fungal-type) is located at residues 28 to 58 (CWECKRRKMKCRFDPRIASACNGCRRRGSPC). 2 disordered regions span residues 75–130 (GTTS…TSQR) and 606–626 (QHATTASKPPVDRSPSSNSDA). Residues 89–109 (RATTPSERTDQILTPVSTVRE) are compositionally biased toward polar residues.

Its subcellular location is the nucleus. Functionally, transcription factor involved in regulation of the dehydrocurvularin biosynthesis gene cluster. The polypeptide is Dehydrocurvularin biosynthesis regulator (Aspergillus terreus).